The chain runs to 604 residues: NADH-ubiquinone oxidoreductase chain 5 (604 aa).

A run of 16 helical transmembrane segments spans residues 2–22 (FSSLMLVSLLVLTLPIMLSIF), 41–61 (AFITSLIPTMMFIHSGQETII), 85–105 (MIFVPVALFVTWSIMEFSLWY), 115–135 (FFKYLLTFLITMMILVTANNL), 138–158 (LFIGWEGVGIMSFLLIGWWYG), 169–189 (AILYNRIGDIGFIMAMAWFLF), 209–231 (LPLLGLLLAATGKSAQFGLHPWL), 239–259 (TPVSALLHSSTMVVAGVFLLI), 271–291 (IQSLTLCLGAITTLFTAICAL), 299–318 (IIAFSTSSQLGLMIVTIGIN), 323–345 (AFLHICTHAFFKAMLFMCSGSII), 364–384 (MPFTTTSLIIGSLALTGIPFL), 411–431 (LIATSLTAVYSTRIIFFALLG), 455–475 (LLIGSIFAGFFISNNIYPTTV), 486–506 (LTALAVTILGFTLALELSLMT), and 582–602 (IKLYFLSFLITLTLSMLLFNL).

The protein belongs to the complex I subunit 5 family. In terms of assembly, core subunit of respiratory chain NADH dehydrogenase (Complex I) which is composed of 45 different subunits.

The protein resides in the mitochondrion inner membrane. It carries out the reaction a ubiquinone + NADH + 5 H(+)(in) = a ubiquinol + NAD(+) + 4 H(+)(out). Functionally, core subunit of the mitochondrial membrane respiratory chain NADH dehydrogenase (Complex I) which catalyzes electron transfer from NADH through the respiratory chain, using ubiquinone as an electron acceptor. Essential for the catalytic activity and assembly of complex I. The chain is NADH-ubiquinone oxidoreductase chain 5 (MT-ND5) from Equus caballus (Horse).